A 319-amino-acid polypeptide reads, in one-letter code: MAEVNISYVSEFILKGITDRPELQAPCFVMFLTIYLVTVLGNLGLIVIIRVDSRLHTPMYFFLSHLAFVDLCYSSAITPKMMVNFVVERNTIPFHACATQLGCFLTFMITECFLLASMAYDRYVAICSPLHYSTLMSKRVCIQLVAVPYVYSFLVALFHTIITFRLTYCGPNVINHFYCDDLPLLALSCSDTHMKEILIFAFAGFDMICSSSIVLTSYLFIIAAILRIRSTQGRRKAISTCGSHMVAVTIFYGTLIFMYLQPKSNHSLDTDKMASVFYTVVIPMLNPLIYSLRNKEVKDASKKALDKGYETLKILRLSK.

Topologically, residues M1 to A25 are extracellular. The N-linked (GlcNAc...) asparagine glycan is linked to N5. The chain crosses the membrane as a helical span at residues P26 to I46. The Cytoplasmic portion of the chain corresponds to V47–R54. Residues L55–S75 traverse the membrane as a helical segment. At A76 to T99 the chain is on the extracellular side. Residues C97 and C189 are joined by a disulfide bond. A helical transmembrane segment spans residues Q100 to Y120. At D121–S133 the chain is on the cytoplasmic side. Residues T134–L154 traverse the membrane as a helical segment. Topologically, residues V155 to E196 are extracellular. Residues I197–S217 form a helical membrane-spanning segment. Over Y218–A237 the chain is Cytoplasmic. Residues I238 to M258 traverse the membrane as a helical segment. Topologically, residues Y259–D271 are extracellular. N-linked (GlcNAc...) asparagine glycosylation is present at N265. Residues K272–L292 traverse the membrane as a helical segment. Residues R293 to K319 are Cytoplasmic-facing.

It belongs to the G-protein coupled receptor 1 family.

It is found in the cell membrane. Potential odorant receptor. This Mus musculus (Mouse) protein is Olfactory receptor 8U3.